A 295-amino-acid chain; its full sequence is Transmembrane protein 71 (295 aa).

Helical transmembrane passes span 229–249 (LLQE…ISAC) and 253–273 (FMGE…VAYV).

The protein belongs to the TMEM71 family.

It localises to the membrane. The polypeptide is Transmembrane protein 71 (TMEM71) (Homo sapiens (Human)).